Here is a 92-residue protein sequence, read N- to C-terminus: C-C motif chemokine 4 (92 aa).

A signal peptide spans 1–23 (MKLCVTVLSLLVLVAAFCSPALS). 2 disulfides stabilise this stretch: cysteine 34–cysteine 58 and cysteine 35–cysteine 74.

Belongs to the intercrine beta (chemokine CC) family. In terms of assembly, homodimer. Interacts with CCR5.

It localises to the secreted. In terms of biological role, monokine with inflammatory and chemokinetic properties. The chain is C-C motif chemokine 4 (CCL4) from Sus scrofa (Pig).